Here is a 182-residue protein sequence, read N- to C-terminus: Large ribosomal subunit protein uL6 (182 aa).

Belongs to the universal ribosomal protein uL6 family. Part of the 50S ribosomal subunit.

In terms of biological role, this protein binds to the 23S rRNA, and is important in its secondary structure. It is located near the subunit interface in the base of the L7/L12 stalk, and near the tRNA binding site of the peptidyltransferase center. The chain is Large ribosomal subunit protein uL6 from Methanocaldococcus jannaschii (strain ATCC 43067 / DSM 2661 / JAL-1 / JCM 10045 / NBRC 100440) (Methanococcus jannaschii).